Reading from the N-terminus, the 1026-residue chain is Tyrosine-protein phosphatase 1 (1026 aa).

The FERM domain occupies 29 to 315; that stretch reads IRCTVTFLDS…EQHTFFRLKT (287 aa). Disordered stretches follow at residues 376–396, 430–456, 489–515, and 584–616; these read SIDS…LPSS, PLTT…SLRQ, GIHA…KSAN, and SFAS…DQVV. Positions 446–456 are enriched in polar residues; the sequence is DSESSAPSLRQ. The span at 600-609 shows a compositional bias: low complexity; the sequence is SPQSNKSSSP. In terms of domain architecture, PDZ spans 617–689; sequence TIKMRPDRHG…DHVVQFIRSA (73 aa). One can recognise a Tyrosine-protein phosphatase domain in the interval 753–1011; it reads VVDHFEMLYR…TFVCESILRA (259 aa). Substrate contacts are provided by residues D920, 952–958, and Q996; that span reads CSAGIGR. Catalysis depends on C952, which acts as the Phosphocysteine intermediate.

The protein belongs to the protein-tyrosine phosphatase family. Non-receptor class subfamily.

Its subcellular location is the cytoplasm. It localises to the cytoskeleton. It catalyses the reaction O-phospho-L-tyrosyl-[protein] + H2O = L-tyrosyl-[protein] + phosphate. In Caenorhabditis elegans, this protein is Tyrosine-protein phosphatase 1 (ptp-1).